Reading from the N-terminus, the 901-residue chain is Protein translocase subunit SecA 1 (901 aa).

ATP-binding positions include Q89, 107–111, and D502; that span reads GEGKT. The interval 856-875 is disordered; it reads AEAKASGDARPGFVEDDPST. Zn(2+) is bound by residues C885, C887, C896, and H897.

The protein belongs to the SecA family. In terms of assembly, monomer and homodimer. Part of the essential Sec protein translocation apparatus which comprises SecA, SecYEG and auxiliary proteins SecDF-YajC and YidC. Zn(2+) serves as cofactor.

The protein localises to the cell inner membrane. The protein resides in the cytoplasm. It carries out the reaction ATP + H2O + cellular proteinSide 1 = ADP + phosphate + cellular proteinSide 2.. Functionally, part of the Sec protein translocase complex. Interacts with the SecYEG preprotein conducting channel. Has a central role in coupling the hydrolysis of ATP to the transfer of proteins into and across the cell membrane, serving both as a receptor for the preprotein-SecB complex and as an ATP-driven molecular motor driving the stepwise translocation of polypeptide chains across the membrane. The polypeptide is Protein translocase subunit SecA 1 (Ruegeria pomeroyi (strain ATCC 700808 / DSM 15171 / DSS-3) (Silicibacter pomeroyi)).